We begin with the raw amino-acid sequence, 352 residues long: Aspartic protease Bla g 2 (352 aa).

The N-terminal stretch at 1–19 (MIGLKLVTVLFAVATITHA) is a signal peptide. Positions 20–24 (AELQR) are cleaved as a propeptide — removed in mature form. Residues 39 to 346 (YAGITKIGNQ…NWENKTMGFG (308 aa)) enclose the Peptidase A1 domain. Residue Asp-55 is part of the active site. Disulfide bonds link Cys-59–Cys-151, Cys-68–Cys-73, and Cys-75–Cys-136. N-linked (GlcNAc...) asparagine glycosylation is present at Asn-117. 2 residues coordinate Zn(2+): His-178 and His-186. The active site involves Asp-239. Intrachain disulfides connect Cys-261/Cys-272 and Cys-276/Cys-309. Residue Asn-295 is glycosylated (N-linked (GlcNAc...) asparagine). The Zn(2+) site is built by Asp-326 and Asp-330. N-linked (GlcNAc...) asparagine glycosylation is present at Asn-340.

This sequence belongs to the peptidase A1 family. Homodimer.

In terms of biological role, functions as a digestive enzyme in the cockroach. This is Aspartic protease Bla g 2 from Blattella germanica (German cockroach).